The following is a 438-amino-acid chain: UPF0229 protein R01398 (438 aa).

The segment at 55–107 is disordered; that stretch reads PARGVNEPAFQPDSNSGERRHVLPGNREFAAGDRIPKRGSGGGAGNAGAGTGQ. Residues 93–105 show a composition bias toward gly residues; it reads GSGGGAGNAGAGT.

Belongs to the UPF0229 family.

The protein is UPF0229 protein R01398 of Rhizobium meliloti (strain 1021) (Ensifer meliloti).